The sequence spans 486 residues: Serine/threonine-protein kinase 32C (486 aa).

A disordered region spans residues 1 to 56 (MRSGAERRGSSAAASPGSPPPGRARPAGSDAPSALPPPAAGQPRARDSGDVRSQPR). Residues Ser-10, Ser-15, and Ser-18 each carry the phosphoserine modification. Residues 24–33 (ARPAGSDAPS) are compositionally biased toward low complexity. Residues 93-353 (FQILRAIGKG…LQDVQAAPAL (261 aa)) enclose the Protein kinase domain. Residues 99-107 (IGKGSFGKV) and Lys-122 contribute to the ATP site. Asp-216 serves as the catalytic Proton acceptor. Positions 396-405 (HKKKKRLAKN) are enriched in basic residues. Disordered stretches follow at residues 396-419 (HKKK…QSEN) and 444-486 (SQDL…AGSG).

It belongs to the protein kinase superfamily. Ser/Thr protein kinase family. It depends on Mg(2+) as a cofactor.

It catalyses the reaction L-seryl-[protein] + ATP = O-phospho-L-seryl-[protein] + ADP + H(+). The catalysed reaction is L-threonyl-[protein] + ATP = O-phospho-L-threonyl-[protein] + ADP + H(+). In Homo sapiens (Human), this protein is Serine/threonine-protein kinase 32C.